The sequence spans 155 residues: Endoribonuclease YbeY (155 aa).

Zn(2+) contacts are provided by His120, His124, and His130.

Belongs to the endoribonuclease YbeY family. Zn(2+) is required as a cofactor.

The protein localises to the cytoplasm. In terms of biological role, single strand-specific metallo-endoribonuclease involved in late-stage 70S ribosome quality control and in maturation of the 3' terminus of the 16S rRNA. The polypeptide is Endoribonuclease YbeY (Staphylococcus aureus (strain MSSA476)).